Consider the following 305-residue polypeptide: Cell division control protein 2 homolog C (305 aa).

Positions 4–297 constitute a Protein kinase domain; the sequence is YEKLEKVGEG…AKAALDHPYF (294 aa). ATP-binding positions include 10 to 18 and lysine 33; that span reads VGEGTYGKV. Threonine 14 carries the phosphothreonine modification. At tyrosine 15 the chain carries Phosphotyrosine. The active-site Proton acceptor is the aspartate 138. Threonine 172 carries the post-translational modification Phosphothreonine; by CAK.

Belongs to the protein kinase superfamily. CMGC Ser/Thr protein kinase family. CDC2/CDKX subfamily.

It carries out the reaction L-seryl-[protein] + ATP = O-phospho-L-seryl-[protein] + ADP + H(+). The catalysed reaction is L-threonyl-[protein] + ATP = O-phospho-L-threonyl-[protein] + ADP + H(+). It catalyses the reaction [DNA-directed RNA polymerase] + ATP = phospho-[DNA-directed RNA polymerase] + ADP + H(+). Plays a key role in the control of the eukaryotic cell cycle. This is Cell division control protein 2 homolog C (CDC2C) from Antirrhinum majus (Garden snapdragon).